A 122-amino-acid chain; its full sequence is Protein TCL1B3 (122 aa).

It belongs to the TCL1 family.

This Mus musculus (Mouse) protein is Protein TCL1B3 (Tcl1b3).